A 237-amino-acid polypeptide reads, in one-letter code: DNA repair protein RecO (237 aa).

The protein belongs to the RecO family.

In terms of biological role, involved in DNA repair and RecF pathway recombination. In Rickettsia akari (strain Hartford), this protein is DNA repair protein RecO.